Here is a 1255-residue protein sequence, read N- to C-terminus: Period circadian protein homolog 2 (1255 aa).

A disordered region spans residues 1-79 (MNGYAEFPPS…EPPDARQSPD (79 aa)). Residues 35–56 (SSGSSGHETNENCSTGRDSQGS) show a composition bias toward polar residues. A Nuclear export signal 1 motif is present at residues 111-120 (LIKTLKELKV). One can recognise a PAS 1 domain in the interval 181 to 248 (VTSEHIVKNA…FHSFTSPYKL (68 aa)). The short motif at 308–312 (LCCLL) is the LXXLL element. Residues 321 to 387 (YEAPRIPPEK…MLAIHKKILQ (67 aa)) form the PAS 2 domain. The PAC domain occupies 395-438 (YSPIRFRARNGEYITLDTSWSSFINPWSRKISFIIGRHKVRVGP). Residues 462 to 471 (LTEQIHRLLL) carry the Nuclear export signal 2 motif. Disordered stretches follow at residues 473–557 (PVPH…AVPA) and 617–646 (RSSD…SRTG). Positions 480 to 484 (SGYGS) are important for protein stability. Residues 504–516 (NGHEDSRRRRAEI) are compositionally biased toward basic and acidic residues. The interval 512-717 (RRAEICKNGN…ALACGLSQEK (206 aa)) is CSNK1E binding domain. Residues Ser-527, Ser-530, Ser-533, and Ser-540 each carry the phosphoserine modification. Residues 529–541 (YSHESGEQKKKSV) show a composition bias toward basic and acidic residues. 6 positions are modified to phosphoserine: Ser-662, Ser-696, Ser-700, Ser-714, Ser-766, and Ser-771. 2 disordered regions span residues 764-838 (ERSK…DTSQ) and 931-985 (FPSH…QSRS). The Nuclear localization signal motif lies at 789 to 805 (KKTGKNRKLKSKRVKPR). Over residues 790 to 803 (KTGKNRKLKSKRVK) the composition is skewed to basic residues. Polar residues-rich tracts occupy residues 829–838 (TAWSPSDTSQ) and 936–956 (TLTS…TSIP). The tract at residues 888–1071 (QFAVQPPPFP…NEDLCSASGS (184 aa)) is interaction with PPARG. Ser-945 is modified (phosphoserine). The segment covering 959 to 972 (PCACPATRATPPSA) has biased composition (low complexity). A Phosphoserine modification is found at Ser-977. The short motif at 989-996 (LQLNLLQL) is the Nuclear export signal 3 element. The segment at 1018 to 1050 (VGADCKPGTSRDQQPKAPLTRDEPSDTQNSDAL) is disordered. An LXXLL motif is present at residues 1057-1061 (LNLLL). Residues 1077–1106 (LGSGSLGCDASPSGAGSSDTSHTSKYFGSI) are disordered. Over residues 1090–1106 (GAGSSDTSHTSKYFGSI) the composition is skewed to polar residues. Position 1124 is a phosphoserine (Ser-1124). The tract at residues 1155–1255 (SRNLEAVLKE…PLNHRIEEQT (101 aa)) is CRY binding domain. A disordered region spans residues 1231 to 1255 (GLSEVSDTKEDENGSPLNHRIEEQT).

As to quaternary structure, homodimer. Component of the circadian core oscillator, which includes the CRY proteins, CLOCK or NPAS2, BMAL1 or BMAL2, CSNK1D and/or CSNK1E, TIMELESS, and the PER proteins. Interacts with CLOCK-BMAL1 (off DNA). Interacts with BMAL2. Interacts directly with PER1 and PER3, and through a C-terminal domain, with CRY1 and CRY2. Interacts (via PAS 2 domain) with TIMELESS. Interacts with NFIL3. Different large complexes have been identified with different repressive functions. The core of PER complexes is composed of at least PER1, PER2, PER3, CRY1, CRY2, CSNK1D and/or CSNK1E. The large PER complex involved in the repression of transcriptional termination is composed of at least PER2, CDK9, DDX5, DHX9, NCBP1 and POLR2A (active). The large PER complex involved in the histone deacetylation is composed of at least HDAC1, PER2, SFPQ and SIN3A. The large PER complex involved in the histone methylation is composed of at least PER2, CBX3, TRIM28, SUV39H1 and/or SUV39H2; CBX3 mediates the formation of the complex. Interacts with SETX; the interaction inhibits termination of circadian target genes. Interacts with the nuclear receptors HNF4A, NR1D1, NR4A2, RORA, PPARA, PPARG and THRA; the interaction with at least PPARG is ligand dependent. Interacts with PML. Interacts (phosphorylated) with BTRC and FBXW11; the interactions trigger proteasomal degradation. Interacts with NONO and SFPQ. Interacts with CAVIN3. Interacts with MAGEL2. Interacts with MAP1LC3B. Interacts with HNF4A. Post-translationally, acetylated. Deacetylated by SIRT1, resulting in decreased protein stability. Deacetylated by SIRT6, preventing its degradation by the proteasome, resulting in increased protein stability. Phosphorylated by CSNK1E and CSNK1D. Phosphorylation results in PER2 protein degradation. May be dephosphorylated by PP1. In terms of processing, ubiquitinated, leading to its proteasomal degradation. Ubiquitination may be inhibited by CRY1. Widely expressed. Found in heart, brain, placenta, lung, liver, skeleatal muscle, kidney and pancreas. High levels in skeletal muscle and pancreas. Low levels in lung. Isoform 2 is expressed in keratinocytes (at protein level).

It is found in the nucleus. The protein resides in the cytoplasm. It localises to the perinuclear region. Its subcellular location is the nucleolus. Transcriptional repressor which forms a core component of the circadian clock. The circadian clock, an internal time-keeping system, regulates various physiological processes through the generation of approximately 24 hour circadian rhythms in gene expression, which are translated into rhythms in metabolism and behavior. It is derived from the Latin roots 'circa' (about) and 'diem' (day) and acts as an important regulator of a wide array of physiological functions including metabolism, sleep, body temperature, blood pressure, endocrine, immune, cardiovascular, and renal function. Consists of two major components: the central clock, residing in the suprachiasmatic nucleus (SCN) of the brain, and the peripheral clocks that are present in nearly every tissue and organ system. Both the central and peripheral clocks can be reset by environmental cues, also known as Zeitgebers (German for 'timegivers'). The predominant Zeitgeber for the central clock is light, which is sensed by retina and signals directly to the SCN. The central clock entrains the peripheral clocks through neuronal and hormonal signals, body temperature and feeding-related cues, aligning all clocks with the external light/dark cycle. Circadian rhythms allow an organism to achieve temporal homeostasis with its environment at the molecular level by regulating gene expression to create a peak of protein expression once every 24 hours to control when a particular physiological process is most active with respect to the solar day. Transcription and translation of core clock components (CLOCK, NPAS2, BMAL1, BMAL2, PER1, PER2, PER3, CRY1 and CRY2) plays a critical role in rhythm generation, whereas delays imposed by post-translational modifications (PTMs) are important for determining the period (tau) of the rhythms (tau refers to the period of a rhythm and is the length, in time, of one complete cycle). A diurnal rhythm is synchronized with the day/night cycle, while the ultradian and infradian rhythms have a period shorter and longer than 24 hours, respectively. Disruptions in the circadian rhythms contribute to the pathology of cardiovascular diseases, cancer, metabolic syndrome and aging. A transcription/translation feedback loop (TTFL) forms the core of the molecular circadian clock mechanism. Transcription factors, CLOCK or NPAS2 and BMAL1 or BMAL2, form the positive limb of the feedback loop, act in the form of a heterodimer and activate the transcription of core clock genes and clock-controlled genes (involved in key metabolic processes), harboring E-box elements (5'-CACGTG-3') within their promoters. The core clock genes: PER1/2/3 and CRY1/2 which are transcriptional repressors form the negative limb of the feedback loop and interact with the CLOCK|NPAS2-BMAL1|BMAL2 heterodimer inhibiting its activity and thereby negatively regulating their own expression. This heterodimer also activates nuclear receptors NR1D1/2 and RORA/B/G, which form a second feedback loop and which activate and repress BMAL1 transcription, respectively. PER1 and PER2 proteins transport CRY1 and CRY2 into the nucleus with appropriate circadian timing, but also contribute directly to repression of clock-controlled target genes through interaction with several classes of RNA-binding proteins, helicases and others transcriptional repressors. PER appears to regulate circadian control of transcription by at least three different modes. First, interacts directly with the CLOCK-BMAL1 at the tail end of the nascent transcript peak to recruit complexes containing the SIN3-HDAC that remodel chromatin to repress transcription. Second, brings H3K9 methyltransferases such as SUV39H1 and SUV39H2 to the E-box elements of the circadian target genes, like PER2 itself or PER1. The recruitment of each repressive modifier to the DNA seems to be very precisely temporally orchestrated by the large PER complex, the deacetylases acting before than the methyltransferases. Additionally, large PER complexes are also recruited to the target genes 3' termination site through interactions with RNA-binding proteins and helicases that may play a role in transcription termination to regulate transcription independently of CLOCK-BMAL1 interactions. Recruitment of large PER complexes to the elongating polymerase at PER and CRY termination sites inhibited SETX action, impeding RNA polymerase II release and thereby repressing transcriptional reinitiation. May propagate clock information to metabolic pathways via the interaction with nuclear receptors. Coactivator of PPARA and corepressor of NR1D1, binds rhythmically at the promoter of nuclear receptors target genes like BMAL1 or G6PC1. Directly and specifically represses PPARG proadipogenic activity by blocking PPARG recruitment to target promoters and thereby inhibiting transcriptional activation. Required for fatty acid and lipid metabolism, is involved as well in the regulation of circulating insulin levels. Plays an important role in the maintenance of cardiovascular functions through the regulation of NO and vasodilatatory prostaglandins production in aortas. Controls circadian glutamate uptake in synaptic vesicles through the regulation of VGLUT1 expression. May also be involved in the regulation of inflammatory processes. Represses the CLOCK-BMAL1 induced transcription of BHLHE40/DEC1 and ATF4. Negatively regulates the formation of the TIMELESS-CRY1 complex by competing with TIMELESS for binding to CRY1. This is Period circadian protein homolog 2 (PER2) from Homo sapiens (Human).